Here is a 145-residue protein sequence, read N- to C-terminus: Putative pre-16S rRNA nuclease (145 aa).

It belongs to the YqgF nuclease family.

The protein resides in the cytoplasm. Its function is as follows. Could be a nuclease involved in processing of the 5'-end of pre-16S rRNA. The sequence is that of Putative pre-16S rRNA nuclease from Tropheryma whipplei (strain Twist) (Whipple's bacillus).